Reading from the N-terminus, the 23-residue chain is Coenzyme PQQ synthesis protein A (23 aa).

The segment at residues 15-19 (EVTMY) is a cross-link (pyrroloquinoline quinone (Glu-Tyr)).

It belongs to the PqqA family.

Its pathway is cofactor biosynthesis; pyrroloquinoline quinone biosynthesis. Functionally, required for coenzyme pyrroloquinoline quinone (PQQ) biosynthesis. PQQ is probably formed by cross-linking a specific glutamate to a specific tyrosine residue and excising these residues from the peptide. This is Coenzyme PQQ synthesis protein A from Pseudomonas putida (strain W619).